The chain runs to 422 residues: uncharacterized protein (422 aa).

Belongs to the N(4)/N(6)-methyltransferase family.

The enzyme catalyses a 2'-deoxyadenosine in DNA + S-adenosyl-L-methionine = an N(6)-methyl-2'-deoxyadenosine in DNA + S-adenosyl-L-homocysteine + H(+). This is an uncharacterized protein from Mycoplasma pneumoniae (strain ATCC 29342 / M129 / Subtype 1) (Mycoplasmoides pneumoniae).